Here is a 196-residue protein sequence, read N- to C-terminus: Molybdenum cofactor guanylyltransferase (196 aa).

Residues 10–12 (LAG), Lys23, Asn51, Asp69, and Asp99 contribute to the GTP site. Asp99 lines the Mg(2+) pocket.

Belongs to the MobA family. As to quaternary structure, monomer. The cofactor is Mg(2+).

It is found in the cytoplasm. It catalyses the reaction Mo-molybdopterin + GTP + H(+) = Mo-molybdopterin guanine dinucleotide + diphosphate. In terms of biological role, transfers a GMP moiety from GTP to Mo-molybdopterin (Mo-MPT) cofactor (Moco or molybdenum cofactor) to form Mo-molybdopterin guanine dinucleotide (Mo-MGD) cofactor. This chain is Molybdenum cofactor guanylyltransferase, found in Shewanella baltica (strain OS185).